The sequence spans 233 residues: Small ribosomal subunit protein uS2 (233 aa).

This sequence belongs to the universal ribosomal protein uS2 family.

The protein is Small ribosomal subunit protein uS2 of Clostridium beijerinckii (strain ATCC 51743 / NCIMB 8052) (Clostridium acetobutylicum).